Reading from the N-terminus, the 55-residue chain is UPF0391 membrane protein NE1120 (55 aa).

2 helical membrane-spanning segments follow: residues Met4–Ala24 and Leu27–Leu47.

It belongs to the UPF0391 family.

It localises to the cell membrane. The polypeptide is UPF0391 membrane protein NE1120 (Nitrosomonas europaea (strain ATCC 19718 / CIP 103999 / KCTC 2705 / NBRC 14298)).